The chain runs to 347 residues: Protein RecA (347 aa).

67–74 provides a ligand contact to ATP; sequence GPESSGKT.

The protein belongs to the RecA family.

It is found in the cytoplasm. Its function is as follows. Can catalyze the hydrolysis of ATP in the presence of single-stranded DNA, the ATP-dependent uptake of single-stranded DNA by duplex DNA, and the ATP-dependent hybridization of homologous single-stranded DNAs. It interacts with LexA causing its activation and leading to its autocatalytic cleavage. The sequence is that of Protein RecA from Sulfurovum sp. (strain NBC37-1).